The sequence spans 148 residues: Transcriptional regulator MraZ (148 aa).

2 consecutive SpoVT-AbrB domains span residues 5 to 51 and 80 to 123; these read ATSL…PLPA and AEDV…SMEA.

The protein belongs to the MraZ family. In terms of assembly, forms oligomers.

The protein resides in the cytoplasm. Its subcellular location is the nucleoid. The polypeptide is Transcriptional regulator MraZ (Methylobacillus flagellatus (strain ATCC 51484 / DSM 6875 / VKM B-1610 / KT)).